Here is a 37-residue protein sequence, read N- to C-terminus: Large ribosomal subunit protein bL36 (37 aa).

This sequence belongs to the bacterial ribosomal protein bL36 family.

The protein is Large ribosomal subunit protein bL36 of Micrococcus luteus (strain ATCC 4698 / DSM 20030 / JCM 1464 / CCM 169 / CCUG 5858 / IAM 1056 / NBRC 3333 / NCIMB 9278 / NCTC 2665 / VKM Ac-2230) (Micrococcus lysodeikticus).